Reading from the N-terminus, the 315-residue chain is Olfactory receptor 5A1 (315 aa).

Topologically, residues 1-28 (MSITKAWNSSSVTMFILLGFTDHPELQA) are extracellular. An N-linked (GlcNAc...) asparagine glycan is attached at N8. Residues 29-52 (LLFVTFLGIYLTTLAWNLALIFLI) traverse the membrane as a helical segment. The Cytoplasmic portion of the chain corresponds to 53–60 (RGDTHLHT). The chain crosses the membrane as a helical span at residues 61 to 82 (PMYFFLSNLSFIDICYSSAVAP). The Extracellular segment spans residues 83-103 (NMLTDFFWEQKTISFVGCAAQ). C100 and C192 are joined by a disulfide. Residues 104 to 123 (FFFFVGMGLSECLLLTAMAY) traverse the membrane as a helical segment. At 124–142 (DRYAAISSPLLYPTIMTQG) the chain is on the cytoplasmic side. The helical transmembrane segment at 143 to 161 (LCTRMVVGAYVGGFLSSLI) threads the bilayer. Topologically, residues 162 to 198 (QASSIFRLHFCGPNIINHFFCDLPPVLALSCSDTFLS) are extracellular. A helical membrane pass occupies residues 199–222 (QVVNFLVVVTVGGTSFLQLLISYG). The Cytoplasmic segment spans residues 223–239 (YIVSAVLKIPSAEGRWK). Residues 240-262 (ACNTCASHLMVVTLLFGTALFVY) form a helical membrane-spanning segment. Residues 263 to 275 (LRPSSSYLLGRDK) are Extracellular-facing. The chain crosses the membrane as a helical span at residues 276-295 (VVSVFYSLVIPMLNPLIYSL). Topologically, residues 296–315 (RNKEIKDALWKVLERKKVFS) are cytoplasmic.

Belongs to the G-protein coupled receptor 1 family.

It is found in the cell membrane. Functionally, odorant receptor. The polypeptide is Olfactory receptor 5A1 (OR5A1) (Homo sapiens (Human)).